Reading from the N-terminus, the 459-residue chain is Vacuolar fusion protein CCZ1 homolog (459 aa).

The protein belongs to the CCZ1 family.

This Nematostella vectensis (Starlet sea anemone) protein is Vacuolar fusion protein CCZ1 homolog.